The sequence spans 760 residues: Phosphatidylinositol N-acetylglucosaminyltransferase subunit Q (760 aa).

The next 5 helical transmembrane spans lie at 278-298 (TVAS…WLHG), 349-371 (LYHI…HILW), 378-400 (CLGL…FHIY), 446-468 (LFIG…LYYL), and 475-497 (LLVV…LPLY). The tract at residues 696–748 (LAVGVEGPCQDEPPSPRHPLAPSAEQHPASGGLKQSLTPVPSGPGPSLPEPHG) is disordered.

Belongs to the PIGQ family. Component of the glycosylphosphatidylinositol-N-acetylglucosaminyltransferase (GPI-GnT) complex composed at least by PIGA, PIGC, PIGH, PIGP, PIGQ, PIGY and DPM2. Interacts with PIGA, PIGH and PIGC.

It is found in the membrane. The protein operates within glycolipid biosynthesis; glycosylphosphatidylinositol-anchor biosynthesis. Its function is as follows. Part of the glycosylphosphatidylinositol-N-acetylglucosaminyltransferase (GPI-GnT) complex that catalyzes the transfer of N-acetylglucosamine from UDP-N-acetylglucosamine to phosphatidylinositol and participates in the first step of GPI biosynthesis. This Homo sapiens (Human) protein is Phosphatidylinositol N-acetylglucosaminyltransferase subunit Q.